The primary structure comprises 164 residues: MAASLGQVLALVLVAALWGGTQPLLKRASAGLQRVHEPTWAQQLLQEMKTLFLNTEYLMPFLLNQCGSLLYYLTLASTDLTLAVPICNSLAIIFTLIVGKALGEDIGGKRAVAGMVLTVIGISLCITSSVPWTAELQLHGKGQLQTLSQKCKREASGTQSERFG.

The next 3 helical transmembrane spans lie at 1-21 (MAASLGQVLALVLVAALWGGT), 82-102 (LAVPICNSLAIIFTLIVGKAL), and 112-132 (VAGMVLTVIGISLCITSSVPW).

The protein belongs to the TMEM234 family.

The protein resides in the membrane. In Homo sapiens (Human), this protein is Transmembrane protein 234 (TMEM234).